Reading from the N-terminus, the 860-residue chain is Protein argonaute-2 (860 aa).

Tyr2 is modified (3'-nitrotyrosine). The PAZ domain maps to 230–349 (PVIEFVCEVL…LPLEVCNIVA (120 aa)). An interaction with guide RNA region spans residues 312–317 (YFKDRH). Ser388 is subject to Phosphoserine. One can recognise a Piwi domain in the interval 518–819 (LVVVILPGKT…VAFRARYHLV (302 aa)). Residues 525-567 (GKTPVYAEVKRVGDTVLGMATQCVQMKNVQRTTPQTLSNLCLK) are interaction with guide RNA. Positions 588–591 (FQQP) are interaction with GW182 family members. A divalent metal cation is bound at residue Asp598. The segment at 651-661 (LIQFYKSTRFK) is interaction with GW182 family members. Asp670 is a binding site for a divalent metal cation. A 4-hydroxyproline modification is found at Pro701. 3 interaction with guide RNA regions span residues 710-711 (KR), 754-762 (HAGIQGTSR), and 791-813 (YVRC…VAFR). His808 serves as a coordination point for a divalent metal cation. Phosphoserine is present on residues Ser825, Ser829, Ser832, and Ser835.

It belongs to the argonaute family. Ago subfamily. As to quaternary structure, interacts with DICER1 through its Piwi domain and with TARBP2 during assembly of the RNA-induced silencing complex (RISC). Together, DICER1, AGO2 and TARBP2 constitute the trimeric RISC loading complex (RLC), or micro-RNA (miRNA) loading complex (miRLC). Within the RLC/miRLC, DICER1 and TARBP2 are required to process precursor miRNAs (pre-miRNAs) to mature miRNAs and then load them onto AGO2. AGO2 bound to the mature miRNA constitutes the minimal RISC and may subsequently dissociate from DICER1 and TARBP2. Note however that the term RISC has also been used to describe the trimeric RLC/miRLC. The formation of RISC complexes containing siRNAs rather than miRNAs appears to occur independently of DICER1. Interacts with AGO1. Also interacts with DDB1, DDX5, DDX6, DDX20, DHX30, DHX36, DDX47, DHX9, ELAVL, FXR1, GEMIN4, HNRNPF, IGF2BP1, ILF3, IMP8, MATR3, PABPC1, PRMT5, P4HA1, P4HB, RBM4, SART3, TNRC6A, TNRC6B, UPF1 and YBX1. Interacts with the P-body components DCP1A and XRN1. Associates with polysomes and messenger ribonucleoproteins (mNRPs). Interacts with RBM4; the interaction is modulated under stress-induced conditions, occurs under both cell proliferation and differentiation conditions and in an RNA- and phosphorylation-independent manner. Interacts with LIMD1, WTIP and AJUBA. Interacts with TRIM71; the interaction increases in presence of RNA. Interacts with APOBEC3G in an RNA-dependent manner. Interacts with APOBEC3A, APOBEC3C, APOBEC3F and APOBEC3H. Interacts with DICER1, TARBP2, EIF6, MOV10 and RPL7A (60S ribosome subunit); they form a large RNA-induced silencing complex (RISC). Interacts with FMR1. Interacts with ZFP36. Interacts with RC3H1; the interaction is RNA independent. Found in a complex, composed of AGO2, CHD7 and ARB2A. Interacts with SND1 and SYT11. Interacts with CLNK. Interacts with GARRE1. Interacts with GRB2; this interaction is important for the formation of a ternary complex containing GRB2, AGO2 and DICER1. Requires Mg(2+) as cofactor. It depends on Mn(2+) as a cofactor. Hydroxylated. 4-hydroxylation appears to enhance protein stability but is not required for miRNA-binding or endonuclease activity. In terms of processing, ubiquitinated on surface-exposed lysines by a SCF-like E3 ubiquitin-protein ligase complex containing ZSWIM8 during target-directed microRNA degradation (TDMD), a process that mediates degradation of microRNAs (miRNAs). Ubiquitination by the SCF-like E3 ubiquitin-protein ligase complex containing ZSWIM8 leads to its subsequent degradation, thereby exposing miRNAs for degradation. ZSWIM8 recognizes and binds AGO2 when it is engaged with a TDMD target. Post-translationally, phosphorylation at Ser-388 by AKT3; leads to up-regulate translational repression of microRNA target and down-regulate endonucleolytic cleavage. A phosphorylation cycle of C-terminal serine cluster (Ser-825-Ser-835) regulates the release of target mRNAs. Target-binding leads to phosphorylation of these residues by CSNK1A1, which reduces the affinity of AGO2 for mRNA and enables target release. The ANKRD52-PPP6C phosphatase complex dephosphorylates the residues, which primes AGO2 for binding a new target.

It localises to the cytoplasm. The protein localises to the P-body. It is found in the nucleus. The enzyme catalyses Endonucleolytic cleavage to 5'-phosphomonoester.. Required for RNA-mediated gene silencing (RNAi) by the RNA-induced silencing complex (RISC). The 'minimal RISC' appears to include AGO2 bound to a short guide RNA such as a microRNA (miRNA) or short interfering RNA (siRNA). These guide RNAs direct RISC to complementary mRNAs that are targets for RISC-mediated gene silencing. The precise mechanism of gene silencing depends on the degree of complementarity between the miRNA or siRNA and its target. Binding of RISC to a perfectly complementary mRNA generally results in silencing due to endonucleolytic cleavage of the mRNA specifically by AGO2. Binding of RISC to a partially complementary mRNA results in silencing through inhibition of translation, and this is independent of endonuclease activity. May inhibit translation initiation by binding to the 7-methylguanosine cap, thereby preventing the recruitment of the translation initiation factor eIF4-E. May also inhibit translation initiation via interaction with EIF6, which itself binds to the 60S ribosomal subunit and prevents its association with the 40S ribosomal subunit. The inhibition of translational initiation leads to the accumulation of the affected mRNA in cytoplasmic processing bodies (P-bodies), where mRNA degradation may subsequently occur. In some cases RISC-mediated translational repression is also observed for miRNAs that perfectly match the 3' untranslated region (3'-UTR). Can also up-regulate the translation of specific mRNAs under certain growth conditions. Binds to the AU element of the 3'-UTR of the TNF (TNF-alpha) mRNA and up-regulates translation under conditions of serum starvation. Also required for transcriptional gene silencing (TGS), in which short RNAs known as antigene RNAs or agRNAs direct the transcriptional repression of complementary promoter regions. The protein is Protein argonaute-2 (Ago2) of Rattus norvegicus (Rat).